Here is a 577-residue protein sequence, read N- to C-terminus: Arginine--tRNA ligase (577 aa).

Positions 122-132 match the 'HIGH' region motif; it reads PNVAKEMHVGH.

It belongs to the class-I aminoacyl-tRNA synthetase family. Monomer.

The protein resides in the cytoplasm. It carries out the reaction tRNA(Arg) + L-arginine + ATP = L-arginyl-tRNA(Arg) + AMP + diphosphate. In Escherichia coli O127:H6 (strain E2348/69 / EPEC), this protein is Arginine--tRNA ligase.